We begin with the raw amino-acid sequence, 1381 residues long: Contactin-associated protein 1 (1381 aa).

An N-terminal signal peptide occupies residues 1–20 (MMSLRLFSILLAAVVSGAQG). Topologically, residues 21–1284 (WGYYGCNEEL…PYYHDDGWIA (1264 aa)) are extracellular. The 144-residue stretch at 26 to 169 (CNEELVGPLY…IGLRLGIYGC (144 aa)) folds into the F5/8 type C domain. The cysteines at positions 26 and 169 are disulfide-linked. N121, N129, and N277 each carry an N-linked (GlcNAc...) asparagine glycan. 2 Laminin G-like domains span residues 204–356 (FKTE…AFRC) and 390–539 (FRTW…FDTC). Residues C324 and C356 are joined by a disulfide bond. N-linked (GlcNAc...) asparagine glycans are attached at residues N421, N500, and N519. 4 disulfide bridges follow: C507–C539, C545–C556, C550–C565, and C567–C577. In terms of domain architecture, EGF-like 1 spans 544 to 576 (RCSPNMCEHDGRCYQSWDDFICYCELTGYKGVT). In terms of domain architecture, Fibrinogen C-terminal spans 577–796 (CHEPLYKESC…NTISFRTGAA (220 aa)). N598, N654, N665, N764, N805, N844, N861, N949, and N957 each carry an N-linked (GlcNAc...) asparagine glycan. The region spanning 814 to 958 (FRTSAPSGVF…NASEGTFPNC (145 aa)) is the Laminin G-like 3 domain. 4 cysteine pairs are disulfide-bonded: C931/C958, C962/C975, C969/C984, and C986/C996. An EGF-like 2 domain is found at 962 to 996 (CTHPRFPCFHGGRCVERYSYYTCDCDLTAFDGPYC). 2 N-linked (GlcNAc...) asparagine glycosylation sites follow: N1079 and N1148. Residues 1089–1251 (FSTSSAPAVL…VQGELSESNC (163 aa)) form the Laminin G-like 4 domain. A disulfide bridge connects residues C1210 and C1251. A helical transmembrane segment spans residues 1285 to 1305 (ILLGFLVAFLLLGLVGMLVLF). Residues 1306-1381 (YLQNHRYKGS…PQILEESRSE (76 aa)) are Cytoplasmic-facing. Residues 1317 to 1381 (HTNEPKATHD…PQILEESRSE (65 aa)) form a disordered region. Basic and acidic residues predominate over residues 1319 to 1329 (NEPKATHDSHP). Positions 1329-1366 (PGGKAPLPPSGPAQAPAPTPAPTQVPTPAPAPASGPGP) match the SH3-binding motif. Residues 1334-1363 (PLPPSGPAQAPAPTPAPTQVPTPAPAPASG) show a composition bias toward pro residues. S1380 is modified (phosphoserine).

It belongs to the neurexin family. Interacts with CNTN1/contactin in cis form. Predominantly expressed in brain. In myelinated nerve fibers of the CNS predominantly found in paranodal axoglial junctions. In unmyelinated nerve fibers of the CNS diffusely distributed along the entire surface. Weak expression is detected in ovary, pancreas, colon, lung, heart, intestine and testis.

It is found in the membrane. It localises to the cell junction. The protein resides in the paranodal septate junction. Functionally, required, with CNTNAP2, for radial and longitudinal organization of myelinated axons. Plays a role in the formation of functional distinct domains critical for saltatory conduction of nerve impulses in myelinated nerve fibers. Demarcates the paranodal region of the axo-glial junction. In association with contactin involved in the signaling between axons and myelinating glial cells. In Rattus norvegicus (Rat), this protein is Contactin-associated protein 1 (Cntnap1).